A 640-amino-acid polypeptide reads, in one-letter code: Threonine--tRNA ligase (640 aa).

The region spanning 1 to 61 (MPAITLPDGS…DADARLRFIT (61 aa)) is the TGS domain. The interval 243–536 (DHRKIGRQMD…LIENCAGRFP (294 aa)) is catalytic. Residues Cys-336, His-387, and His-513 each contribute to the Zn(2+) site.

This sequence belongs to the class-II aminoacyl-tRNA synthetase family. As to quaternary structure, homodimer. The cofactor is Zn(2+).

It localises to the cytoplasm. The catalysed reaction is tRNA(Thr) + L-threonine + ATP = L-threonyl-tRNA(Thr) + AMP + diphosphate + H(+). Catalyzes the attachment of threonine to tRNA(Thr) in a two-step reaction: L-threonine is first activated by ATP to form Thr-AMP and then transferred to the acceptor end of tRNA(Thr). Also edits incorrectly charged L-seryl-tRNA(Thr). This Acidiphilium cryptum (strain JF-5) protein is Threonine--tRNA ligase.